We begin with the raw amino-acid sequence, 289 residues long: Rhodopsin (289 aa).

Topologically, residues 1–7 (YLVNPAG) are extracellular. The chain crosses the membrane as a helical span at residues 8-32 (YAALGAYMFLLILIGFPVNFLTLYV). The Cytoplasmic segment spans residues 33–44 (TLEHKKLRTPLN). A helical membrane pass occupies residues 45–67 (YILLNLAVADLFMVLGGFTTTMY). Residues 68–81 (TSMHGYFVLGRLGC) lie on the Extracellular side of the membrane. A disulfide bridge links Cys81 with Cys158. A helical membrane pass occupies residues 82-104 (NLEGFFATLGGEIALWSLVVLAI). Residues 105-107 (ERW) carry the 'Ionic lock' involved in activated form stabilization motif. Topologically, residues 105–123 (ERWIVGLKPIRNFRFTEDH) are cytoplasmic. The helical transmembrane segment at 124-144 (AIMGLAFSWVMALSCAVPPLA) threads the bilayer. Residues 145 to 173 (GWLRYIPEGIQGSCGVDYYTRAEGFNNES) lie on the Extracellular side of the membrane. N-linked (GlcNAc...) asparagine glycosylation is present at Asn171. Residues 174-195 (FVIYMFTVHFLIPLSVIFFCYG) traverse the membrane as a helical segment. The Cytoplasmic portion of the chain corresponds to 196-223 (RLLCAVKEAAAAQQESETTQRAEKEVSR). Residues 224–245 (MVVIMVIGFLVCWLPYASVAWW) traverse the membrane as a helical segment. Topologically, residues 246-257 (IFCNQGSDFGPI) are extracellular. Residues 258–279 (FMTLPSFFAKRPAIYNPMIYIC) traverse the membrane as a helical segment. Lys267 is subject to N6-(retinylidene)lysine. Residues 280 to 289 (MNKQFRHCMI) are Cytoplasmic-facing.

It belongs to the G-protein coupled receptor 1 family. Opsin subfamily. Post-translationally, phosphorylated on some or all of the serine and threonine residues present in the C-terminal region. Contains one covalently linked retinal chromophore.

It localises to the membrane. It is found in the cell projection. The protein localises to the cilium. The protein resides in the photoreceptor outer segment. Its function is as follows. Photoreceptor required for image-forming vision at low light intensity. While most salt water fish species use retinal as chromophore, most freshwater fish use 3-dehydroretinal, or a mixture of retinal and 3-dehydroretinal. Light-induced isomerization of 11-cis to all-trans retinal triggers a conformational change that activates signaling via G-proteins. Subsequent receptor phosphorylation mediates displacement of the bound G-protein alpha subunit by arrestin and terminates signaling. The sequence is that of Rhodopsin (rho) from Limnocottus pallidus (Ray-finned fish).